Reading from the N-terminus, the 104-residue chain is Large ribosomal subunit protein uL24 (104 aa).

Belongs to the universal ribosomal protein uL24 family. Part of the 50S ribosomal subunit.

Functionally, one of two assembly initiator proteins, it binds directly to the 5'-end of the 23S rRNA, where it nucleates assembly of the 50S subunit. Its function is as follows. One of the proteins that surrounds the polypeptide exit tunnel on the outside of the subunit. The sequence is that of Large ribosomal subunit protein uL24 from Klebsiella pneumoniae (strain 342).